The following is a 256-amino-acid chain: Small ribosomal subunit protein eS1 (256 aa).

Basic residues predominate over residues 1 to 18 (MAVGKNKRLSKGKKGIKK). The disordered stretch occupies residues 1–20 (MAVGKNKRLSKGKKGIKKRT). The residue at position 2 (Ala2) is an N-acetylalanine; partial.

This sequence belongs to the eukaryotic ribosomal protein eS1 family. As to quaternary structure, component of the small ribosomal subunit. Mature ribosomes consist of a small (40S) and a large (60S) subunit. The 40S subunit contains about 33 different proteins and 1 molecule of RNA (18S). The 60S subunit contains about 49 different proteins and 3 molecules of RNA (25S, 5.8S and 5S).

The protein resides in the cytoplasm. This is Small ribosomal subunit protein eS1 (rps1) from Emericella nidulans (strain FGSC A4 / ATCC 38163 / CBS 112.46 / NRRL 194 / M139) (Aspergillus nidulans).